A 789-amino-acid chain; its full sequence is Probable Xaa-Pro aminopeptidase SNOG_02267 (789 aa).

The Mn(2+) site is built by aspartate 240, aspartate 251, glutamate 375, and glutamate 416. 2 disordered regions span residues serine 607–alanine 658 and asparagine 670–leucine 704. Over residues valine 622–threonine 637 the composition is skewed to polar residues. A compositionally biased stretch (basic and acidic residues) spans alanine 638–glutamine 650.

Belongs to the peptidase M24B family. It depends on Mn(2+) as a cofactor.

The enzyme catalyses Release of any N-terminal amino acid, including proline, that is linked to proline, even from a dipeptide or tripeptide.. Its function is as follows. Catalyzes the removal of a penultimate prolyl residue from the N-termini of peptides. The protein is Probable Xaa-Pro aminopeptidase SNOG_02267 of Phaeosphaeria nodorum (strain SN15 / ATCC MYA-4574 / FGSC 10173) (Glume blotch fungus).